Here is a 220-residue protein sequence, read N- to C-terminus: Protein-L-isoaspartate O-methyltransferase (220 aa).

The active site involves Ser-67.

This sequence belongs to the methyltransferase superfamily. L-isoaspartyl/D-aspartyl protein methyltransferase family.

The protein localises to the cytoplasm. The catalysed reaction is [protein]-L-isoaspartate + S-adenosyl-L-methionine = [protein]-L-isoaspartate alpha-methyl ester + S-adenosyl-L-homocysteine. In terms of biological role, catalyzes the methyl esterification of L-isoaspartyl residues in peptides and proteins that result from spontaneous decomposition of normal L-aspartyl and L-asparaginyl residues. It plays a role in the repair and/or degradation of damaged proteins. This Chlorobium phaeobacteroides (strain BS1) protein is Protein-L-isoaspartate O-methyltransferase.